We begin with the raw amino-acid sequence, 652 residues long: Set1 complex component ash2 (652 aa).

A disordered region spans residues 1 to 32; sequence MLAHGSNDYGVSLKGNKTGSSPSKASSLNWNE. Over residues 15–32 the composition is skewed to polar residues; it reads GNKTGSSPSKASSLNWNE. A PHD-type zinc finger spans residues 40 to 94; that stretch reads NTYCYCGKDRNLRFPDLQCSVCLNMFHLSCLSPPCTSMMGFSTNYQFVCKHCTED. Zn(2+)-binding residues include Cys43, Cys45, Cys58, Cys61, His66, Cys69, Cys88, and Cys91. A disordered region spans residues 234–270; it reads RLVETETPPPSSSKLKEDYKDSKREMKRSNTPWSNAS. Residues 247-261 are compositionally biased toward basic and acidic residues; the sequence is KLKEDYKDSKREMKR. Residues 330-519 form the B30.2/SPRY domain; it reads EAAKDLPNVM…KHNRYIDLPY (190 aa).

Belongs to the cclA family. As to quaternary structure, component of the Set1 complex composed of ash2, sdc1, set1, shg1, spp1, swd1, swd2 and swd3. Component of the Lid2 complex composed of ash2, jmj3, lid2, sdc1 and snt2.

The protein localises to the nucleus. Component of the COMPASS (Set1C) complex that specifically mono-, di- and trimethylates histone H3 to form H3K4me1/2/3, which subsequently plays a role in telomere length maintenance and transcription elongation regulation. Regulates MAPK pathway and sporulation through H3K4 methylation. The polypeptide is Set1 complex component ash2 (Schizosaccharomyces pombe (strain 972 / ATCC 24843) (Fission yeast)).